The following is a 152-amino-acid chain: Deoxyuridine 5'-triphosphate nucleotidohydrolase (152 aa).

Residues 71 to 73 (RSG), asparagine 84, 88 to 90 (LID), and methionine 98 contribute to the substrate site.

Belongs to the dUTPase family. It depends on Mg(2+) as a cofactor.

It carries out the reaction dUTP + H2O = dUMP + diphosphate + H(+). It participates in pyrimidine metabolism; dUMP biosynthesis; dUMP from dCTP (dUTP route): step 2/2. Functionally, this enzyme is involved in nucleotide metabolism: it produces dUMP, the immediate precursor of thymidine nucleotides and it decreases the intracellular concentration of dUTP so that uracil cannot be incorporated into DNA. The protein is Deoxyuridine 5'-triphosphate nucleotidohydrolase of Shewanella denitrificans (strain OS217 / ATCC BAA-1090 / DSM 15013).